A 366-amino-acid chain; its full sequence is tRNA/tmRNA (uracil-C(5))-methyltransferase (366 aa).

Q190, Y218, N223, E239, and D299 together coordinate S-adenosyl-L-methionine. The Nucleophile role is filled by C324. E358 serves as the catalytic Proton acceptor.

This sequence belongs to the class I-like SAM-binding methyltransferase superfamily. RNA M5U methyltransferase family. TrmA subfamily.

The enzyme catalyses uridine(54) in tRNA + S-adenosyl-L-methionine = 5-methyluridine(54) in tRNA + S-adenosyl-L-homocysteine + H(+). It carries out the reaction uridine(341) in tmRNA + S-adenosyl-L-methionine = 5-methyluridine(341) in tmRNA + S-adenosyl-L-homocysteine + H(+). Functionally, dual-specificity methyltransferase that catalyzes the formation of 5-methyluridine at position 54 (m5U54) in all tRNAs, and that of position 341 (m5U341) in tmRNA (transfer-mRNA). The protein is tRNA/tmRNA (uracil-C(5))-methyltransferase of Escherichia fergusonii (strain ATCC 35469 / DSM 13698 / CCUG 18766 / IAM 14443 / JCM 21226 / LMG 7866 / NBRC 102419 / NCTC 12128 / CDC 0568-73).